The primary structure comprises 459 residues: tRNA modification GTPase MnmE (459 aa).

The (6S)-5-formyl-5,6,7,8-tetrahydrofolate site is built by Arg23, Glu88, and Arg127. Residues 223–381 (GLNTVIIGKP…LKDTIENMFA (159 aa)) form the TrmE-type G domain. Asn233 is a binding site for K(+). Residues 233 to 238 (NVGKSS), 252 to 258 (TDIPGTT), and 277 to 280 (DTAG) each bind GTP. Ser237 contacts Mg(2+). K(+) contacts are provided by Thr252, Ile254, and Thr257. Residue Thr258 participates in Mg(2+) binding. Residue Lys459 participates in (6S)-5-formyl-5,6,7,8-tetrahydrofolate binding.

This sequence belongs to the TRAFAC class TrmE-Era-EngA-EngB-Septin-like GTPase superfamily. TrmE GTPase family. Homodimer. Heterotetramer of two MnmE and two MnmG subunits. It depends on K(+) as a cofactor.

The protein resides in the cytoplasm. Its function is as follows. Exhibits a very high intrinsic GTPase hydrolysis rate. Involved in the addition of a carboxymethylaminomethyl (cmnm) group at the wobble position (U34) of certain tRNAs, forming tRNA-cmnm(5)s(2)U34. The protein is tRNA modification GTPase MnmE of Clostridium acetobutylicum (strain ATCC 824 / DSM 792 / JCM 1419 / IAM 19013 / LMG 5710 / NBRC 13948 / NRRL B-527 / VKM B-1787 / 2291 / W).